The primary structure comprises 43 residues: Protein PsbN (43 aa).

A helical transmembrane segment spans residues 7–27 (ITIFLSCFLVGVTGYALYTAF).

It belongs to the PsbN family.

The protein resides in the plastid. Its subcellular location is the chloroplast thylakoid membrane. May play a role in photosystem I and II biogenesis. The protein is Protein PsbN of Klebsormidium bilatum (Filamentous green alga).